Reading from the N-terminus, the 736-residue chain is Microtubule-associated protein mu-2 (736 aa).

It belongs to the orthoreovirus mu-2 protein family. In terms of assembly, interacts with protein mu-NS; in viral inclusions. Interacts with polymerase lambda-3; this interaction stimulates the ATPase activity of mu-2. The cofactor is a divalent metal cation.

It localises to the virion. Its subcellular location is the host cytoplasm. The protein resides in the host cytoskeleton. Functionally, minor inner capsid (core) component. Displays NTPase and RNA 5'-triphosphatase (RTPase) activities. ATP is the preferred substrate for hydrolysis. May function as a cofactor of polymerase lambda-3. Associates with microtubules and plays a role in the formation, structural organization and morphology of viral inclusions, where the assembly of cores and the replication of viral RNA occur. Together with mu-NS, recruits the other core proteins to these inclusions. The protein is Microtubule-associated protein mu-2 (M1) of Mammalia (T3D).